The primary structure comprises 354 residues: Methylthioribose-1-phosphate isomerase (354 aa).

Substrate-binding positions include 45 to 47 (RGA), Arg87, and Gln204. Residue Asp245 is the Proton donor of the active site. 255-256 (NK) lines the substrate pocket.

This sequence belongs to the eIF-2B alpha/beta/delta subunits family. MtnA subfamily.

The catalysed reaction is 5-(methylsulfanyl)-alpha-D-ribose 1-phosphate = 5-(methylsulfanyl)-D-ribulose 1-phosphate. It functions in the pathway amino-acid biosynthesis; L-methionine biosynthesis via salvage pathway; L-methionine from S-methyl-5-thio-alpha-D-ribose 1-phosphate: step 1/6. In terms of biological role, catalyzes the interconversion of methylthioribose-1-phosphate (MTR-1-P) into methylthioribulose-1-phosphate (MTRu-1-P). The sequence is that of Methylthioribose-1-phosphate isomerase from Chlorobaculum tepidum (strain ATCC 49652 / DSM 12025 / NBRC 103806 / TLS) (Chlorobium tepidum).